We begin with the raw amino-acid sequence, 244 residues long: Venom nerve growth factor 2 (244 aa).

Residues 1 to 18 form the signal peptide; that stretch reads MSMLCYTLIIAFLIGTWA. Positions 19 to 125 are excised as a propeptide; it reads APKSEDNVPL…TLNRNIRAKR (107 aa). A compositionally biased stretch (basic and acidic residues) spans 47 to 66; that stretch reads GLKTSRNTDQRHPAPKKAED. The interval 47-67 is disordered; it reads GLKTSRNTDQRHPAPKKAEDQ. 3 cysteine pairs are disulfide-bonded: C139/C205, C181/C233, and C193/C235.

Belongs to the NGF-beta family. In terms of assembly, homodimer; non-covalently linked. In terms of tissue distribution, expressed by the venom gland.

Its subcellular location is the secreted. Its function is as follows. Nerve growth factor is important for the development and maintenance of the sympathetic and sensory nervous systems. It stimulates division and differentiation of sympathetic and embryonic sensory neurons as well as basal forebrain cholinergic neurons in the brain. Its relevance in the snake venom is not clear. However, it has been shown to inhibit metalloproteinase-dependent proteolysis of platelet glycoprotein Ib alpha, suggesting a metalloproteinase inhibition to prevent metalloprotease autodigestion and/or protection against prey proteases. Binds a lipid between the two protein chains in the homodimer. The lipid-bound form promotes histamine relase from mouse mast cells, contrary to the lipid-free form. The polypeptide is Venom nerve growth factor 2 (Tropidechis carinatus (Australian rough-scaled snake)).